The sequence spans 454 residues: Bifunctional protein GlmU (454 aa).

Residues 1–225 are pyrophosphorylase; that stretch reads MNIVILAAGM…IWETLGVNSK (225 aa). Residues 6-9, lysine 20, glutamine 71, 76-77, 98-100, glycine 135, glutamate 150, asparagine 165, and asparagine 223 each bind UDP-N-acetyl-alpha-D-glucosamine; these read LAAG, GT, and YGD. Residue aspartate 100 participates in Mg(2+) binding. Mg(2+) is bound at residue asparagine 223. The interval 226–246 is linker; sequence LQLAEVERIHQGNQARRLLEA. Residues 247–454 are N-acetyltransferase; it reads GVTLLDPARI…WQRPVKQPKK (208 aa). 2 residues coordinate UDP-N-acetyl-alpha-D-glucosamine: arginine 329 and lysine 347. Histidine 359 (proton acceptor) is an active-site residue. 2 residues coordinate UDP-N-acetyl-alpha-D-glucosamine: tyrosine 362 and asparagine 373. Acetyl-CoA-binding positions include alanine 376, 382-383, serine 401, alanine 419, and arginine 436; that span reads NY.

This sequence in the N-terminal section; belongs to the N-acetylglucosamine-1-phosphate uridyltransferase family. The protein in the C-terminal section; belongs to the transferase hexapeptide repeat family. As to quaternary structure, homotrimer. It depends on Mg(2+) as a cofactor.

It localises to the cytoplasm. The enzyme catalyses alpha-D-glucosamine 1-phosphate + acetyl-CoA = N-acetyl-alpha-D-glucosamine 1-phosphate + CoA + H(+). It carries out the reaction N-acetyl-alpha-D-glucosamine 1-phosphate + UTP + H(+) = UDP-N-acetyl-alpha-D-glucosamine + diphosphate. Its pathway is nucleotide-sugar biosynthesis; UDP-N-acetyl-alpha-D-glucosamine biosynthesis; N-acetyl-alpha-D-glucosamine 1-phosphate from alpha-D-glucosamine 6-phosphate (route II): step 2/2. It functions in the pathway nucleotide-sugar biosynthesis; UDP-N-acetyl-alpha-D-glucosamine biosynthesis; UDP-N-acetyl-alpha-D-glucosamine from N-acetyl-alpha-D-glucosamine 1-phosphate: step 1/1. The protein operates within bacterial outer membrane biogenesis; LPS lipid A biosynthesis. Functionally, catalyzes the last two sequential reactions in the de novo biosynthetic pathway for UDP-N-acetylglucosamine (UDP-GlcNAc). The C-terminal domain catalyzes the transfer of acetyl group from acetyl coenzyme A to glucosamine-1-phosphate (GlcN-1-P) to produce N-acetylglucosamine-1-phosphate (GlcNAc-1-P), which is converted into UDP-GlcNAc by the transfer of uridine 5-monophosphate (from uridine 5-triphosphate), a reaction catalyzed by the N-terminal domain. The chain is Bifunctional protein GlmU from Cupriavidus necator (strain ATCC 17699 / DSM 428 / KCTC 22496 / NCIMB 10442 / H16 / Stanier 337) (Ralstonia eutropha).